Consider the following 203-residue polypeptide: E3 ubiquitin-protein ligase rnf152-B (203 aa).

The RING-type zinc finger occupies 12 to 55; the sequence is CQICFNYYSPRRRPKLLDCKHTCCSVCLQQMRASQKDLRCPWCR. A helical transmembrane segment spans residues 167 to 187; the sequence is SGVCTVILVACVLVFLLGIVL.

This sequence belongs to the RNF152 family.

It is found in the lysosome membrane. It carries out the reaction S-ubiquitinyl-[E2 ubiquitin-conjugating enzyme]-L-cysteine + [acceptor protein]-L-lysine = [E2 ubiquitin-conjugating enzyme]-L-cysteine + N(6)-ubiquitinyl-[acceptor protein]-L-lysine.. It functions in the pathway protein modification; protein ubiquitination. E3 ubiquitin-protein ligase that acts as a negative regulator of mTORC1 signaling by mediating ubiquitination of RagA/RRAGA and RHEB. Catalyzes 'Lys-63'-linked polyubiquitination of RagA/RRAGA in response to amino acid starvation, thereby regulating mTORC1 signaling. Also mediates monoubiquitination of RHEB, promoting its association with the TSC-TBC complex and subsequent inhibition. Also mediates 'Lys-48'-linked polyubiquitination of target proteins and their subsequent targeting to the proteasome for degradation. This Xenopus laevis (African clawed frog) protein is E3 ubiquitin-protein ligase rnf152-B.